Here is a 491-residue protein sequence, read N- to C-terminus: MAQKTLLIITDGIGYRKDSDHNAFFHAKKPTYDLMFKTLPYSLIDTHGLSVGLPKGQMGNSEVGHMCIGAGRVLYQDLVKISLSLQNDELKNNPAFLNTIQKSPVVHLMGLMSDGGVHSHIEHFIALALECEKSHKKVCLHLITDGRDVAPKSALTYLKQMQNICNESIQIATISGRFYAMDRDKRFERIELAYHSLMGLNHTPLSPSEYIQSQYDKNITDEFIMPACFKNYCGMQDDESFIFINFRNDRAREIVSALGQKQFSGFKRQVFKKLHIATMTPYDNTFPYPVLFPKESVQNTLAEVVSQHNLTQSHIAETEKYAHVTFFINGGVETPFKNENRVLIQSPKVTTYDLKPEMSAKEVTLAVLEQMKLGTDLIIVNFANGDMVGHTGNFEASVKAVEAVDACLGEILSLAKKLDYAMLLTSDHGNCERMKDENQNPLTNHTAGSVYCFVLGDGVKSIKNGALNNIASSVLKLMGLKAPATMDEPLF.

D11 and S61 together coordinate Mn(2+). The active-site Phosphoserine intermediate is the S61. Substrate-binding positions include H118, 147–148, R177, R183, 247–250, and K320; these read RD and RNDR. Residues D386, H390, D427, H428, and H445 each coordinate Mn(2+).

The protein belongs to the BPG-independent phosphoglycerate mutase family. In terms of assembly, monomer. Requires Mn(2+) as cofactor.

It carries out the reaction (2R)-2-phosphoglycerate = (2R)-3-phosphoglycerate. Its pathway is carbohydrate degradation; glycolysis; pyruvate from D-glyceraldehyde 3-phosphate: step 3/5. Its function is as follows. Catalyzes the interconversion of 2-phosphoglycerate and 3-phosphoglycerate. The sequence is that of 2,3-bisphosphoglycerate-independent phosphoglycerate mutase from Helicobacter pylori (strain ATCC 700392 / 26695) (Campylobacter pylori).